The primary structure comprises 263 residues: Hydroxyethylthiazole kinase (263 aa).

Met41 is a binding site for substrate. ATP contacts are provided by Lys117 and Ser163. Gly190 lines the substrate pocket.

It belongs to the Thz kinase family. It depends on Mg(2+) as a cofactor.

It carries out the reaction 5-(2-hydroxyethyl)-4-methylthiazole + ATP = 4-methyl-5-(2-phosphooxyethyl)-thiazole + ADP + H(+). Its pathway is cofactor biosynthesis; thiamine diphosphate biosynthesis; 4-methyl-5-(2-phosphoethyl)-thiazole from 5-(2-hydroxyethyl)-4-methylthiazole: step 1/1. Functionally, catalyzes the phosphorylation of the hydroxyl group of 4-methyl-5-beta-hydroxyethylthiazole (THZ). In Thermoanaerobacter sp. (strain X514), this protein is Hydroxyethylthiazole kinase.